A 542-amino-acid chain; its full sequence is Signal peptide peptidase-like 5 (542 aa).

A signal peptide spans 1–23 (MAAATAAVFALLMASALAGAAAG). Over 24 to 192 (GDIVHHDDEA…PDRPVVDTAE (169 aa)) the chain is Lumenal. Asn79 and Asn145 each carry an N-linked (GlcNAc...) asparagine glycan. The 76-residue stretch at 92 to 167 (CTSPKEKVSG…LPRDAGFALH (76 aa)) folds into the PA domain. Residues 193–213 (VFLWLMAVGTVLCASYWSAWS) form a helical membrane-spanning segment. At 214–245 (AREALCEQEKLLKDGREVLLNVENGSSSGMID) the chain is on the cytoplasmic side. A helical transmembrane segment spans residues 246-266 (INVASAIMFVVVASCFLIMLY). Over 267-275 (KMMSSWFVE) the chain is Lumenal. Residues 276–296 (LLVVIFCVGGVEGLQTCLVAL) form a helical membrane-spanning segment. Residues 297-316 (LSRWFRAASESFFKVPFFGA) lie on the Cytoplasmic side of the membrane. A helical membrane pass occupies residues 317 to 337 (VSYLTLAVSPFCIVFAVLWAV). Over 338–342 (HRHFT) the chain is Lumenal. Residues 343-363 (YAWIGQDILGIALIITVIQIV) traverse the membrane as a helical segment. Over 364 to 367 (RVPN) the chain is Cytoplasmic. A helical membrane pass occupies residues 368-388 (LKVGSVLLSCAFFYDIFWVFV). The active site involves Asp382. At 389–426 (SKRWFHESVMIVVARGDKTDEDGVPMLLKIPRMFDPWG) the chain is on the lumenal side. The helical transmembrane segment at 427 to 447 (GYSIIGFGDILLPGLLVAFAL) threads the bilayer. The active site involves Asp435. Over 448–459 (RYDWAAKKSLQT) the chain is Cytoplasmic. Residues 460-480 (GYFLWSMVAYGSGLLITYVAL) form a helical membrane-spanning segment. At 481-486 (NLMDGH) the chain is on the lumenal side. Residues 487–507 (GQPALLYIVPFTLGALISLGW) form a helical membrane-spanning segment. Positions 489–491 (PAL) match the PAL motif. Residues 508–542 (KRGELWNLWSKGEPERVCPHHMHMQPQPKTPPLVQ) lie on the Cytoplasmic side of the membrane.

The protein belongs to the peptidase A22B family. Post-translationally, glycosylated.

Its subcellular location is the endosome membrane. Functionally, intramembrane-cleaving aspartic protease (I-CLiP) that cleaves type II membrane signal peptides in the hydrophobic plane of the membrane. This chain is Signal peptide peptidase-like 5 (SPPL5), found in Oryza sativa subsp. japonica (Rice).